A 351-amino-acid polypeptide reads, in one-letter code: Glycerol-3-phosphate dehydrogenase 1-like protein (351 aa).

12-17 provides a ligand contact to NAD(+); the sequence is GSGNWG. Lysine 122 contacts substrate. Alanine 155 lines the NAD(+) pocket. Lysine 206 acts as the Proton acceptor in catalysis. NAD(+) is bound by residues arginine 271, lysine 298, and glutamine 300. 271 to 272 contacts substrate; that stretch reads RN.

This sequence belongs to the NAD-dependent glycerol-3-phosphate dehydrogenase family. In terms of assembly, interacts with SCN5A. Most highly expressed in heart tissue, with lower levels in the skeletal muscle, kidney, lung and other organs.

It localises to the cytoplasm. The enzyme catalyses sn-glycerol 3-phosphate + NAD(+) = dihydroxyacetone phosphate + NADH + H(+). Functionally, plays a role in regulating cardiac sodium current; decreased enzymatic activity with resulting increased levels of glycerol 3-phosphate activating the DPD1L-dependent SCN5A phosphorylation pathway, may ultimately lead to decreased sodium current; cardiac sodium current may also be reduced due to alterations of NAD(H) balance induced by DPD1L. The sequence is that of Glycerol-3-phosphate dehydrogenase 1-like protein from Homo sapiens (Human).